The chain runs to 165 residues: Protein OPG091 (165 aa).

Belongs to the orthopoxvirus OPG091 family.

It localises to the virion. The protein localises to the host cytoplasm. Contributes to virulence in host but not to replication in cell culture. In Cynomys gunnisoni (Gunnison's prairie dog), this protein is Protein OPG091 (OPG091).